The sequence spans 125 residues: Ribonuclease P protein component 1 (125 aa).

The span at 1–13 (MRRNGKEGKDRAP) shows a compositional bias: basic and acidic residues. Positions 1 to 24 (MRRNGKEGKDRAPGRPQRKGQEVA) are disordered.

It belongs to the eukaryotic/archaeal RNase P protein component 1 family. Consists of a catalytic RNA component and at least 4-5 protein subunits.

The protein localises to the cytoplasm. The catalysed reaction is Endonucleolytic cleavage of RNA, removing 5'-extranucleotides from tRNA precursor.. Its function is as follows. Part of ribonuclease P, a protein complex that generates mature tRNA molecules by cleaving their 5'-ends. This is Ribonuclease P protein component 1 from Thermococcus onnurineus (strain NA1).